The chain runs to 510 residues: Probable cytochrome P450 4d20 (510 aa).

Cys-455 contacts heme.

Belongs to the cytochrome P450 family. Heme serves as cofactor.

Its subcellular location is the endoplasmic reticulum membrane. It is found in the microsome membrane. In terms of biological role, may be involved in the metabolism of insect hormones and in the breakdown of synthetic insecticides. This is Probable cytochrome P450 4d20 (Cyp4d20) from Drosophila melanogaster (Fruit fly).